The primary structure comprises 1005 residues: Myosin IE heavy chain (1005 aa).

A Myosin motor domain is found at 8–693; that stretch reads EGVPDFVLLN…TLFYFEEKRE (686 aa). Residue 101 to 108 coordinates ATP; sequence GESGAGKT. The tract at residues 539 to 562 is disordered; it reads SDPLVQGLFPPTRPEDSKKRPETA. The segment covering 551–560 has biased composition (basic and acidic residues); it reads RPEDSKKRPE. The segment at 556 to 630 is actin-binding; sequence KKRPETAGSQ…RAGFAGRIEY (75 aa). IQ domains are found at residues 694–722 and 716–745; these read LEMP…RKAA and WNQR…HRAF. In terms of domain architecture, TH1 spans 810 to 1004; it reads KKKWDFRRHF…KGNQATIQFK (195 aa).

This sequence belongs to the TRAFAC class myosin-kinesin ATPase superfamily. Myosin family. Myosin I heavy chain is single-headed. Dimer of a heavy and a light chain. Inability to self-assemble into filaments.

In terms of biological role, myosin is a protein that binds to actin and has ATPase activity that is activated by actin. May play a role in moving membranes relative to actin. This Dictyostelium discoideum (Social amoeba) protein is Myosin IE heavy chain (myoE).